A 347-amino-acid chain; its full sequence is Cell shape-determining protein MreB (347 aa).

Residues 19–21, 165–167, 213–216, and 295–298 each bind ATP; these read TAN, GGT, ERIK, and GGAL.

Belongs to the FtsA/MreB family. In terms of assembly, forms polymers in the presence of ATP. Forms pairs of protofilaments that adopt an antiparallel arrangement and bind to lipids.

It is found in the cytoplasm. Functionally, forms membrane-associated dynamic filaments that are essential for cell shape determination. Acts by regulating cell wall synthesis and cell elongation, and thus cell shape. A feedback loop between cell geometry and MreB localization may maintain elongated cell shape by targeting cell wall growth to regions of negative cell wall curvature. Required for mid-cell peptidoglycan synthesis and cell division. Directs the localization of the cytosolic peptidoglycan precursor-synthesizing enzyme MurG. Also required for proper chromosome segregation. Directs the segregation of origin-proximal but not origin-distal loci. This chain is Cell shape-determining protein MreB, found in Caulobacter vibrioides (strain NA1000 / CB15N) (Caulobacter crescentus).